A 326-amino-acid polypeptide reads, in one-letter code: Cyclin-dependent kinase B2-1 (326 aa).

Residues 28 to 318 (YEKLEKVGEG…AKKAMEHPYF (291 aa)) enclose the Protein kinase domain. Residues 34–42 (VGEGTYGKV) and K57 contribute to the ATP site. Position 38 is a phosphothreonine (T38). Position 39 is a phosphotyrosine (Y39). D159 serves as the catalytic Proton acceptor. At T193 the chain carries Phosphothreonine.

The protein belongs to the protein kinase superfamily. CMGC Ser/Thr protein kinase family. CDC2/CDKX subfamily. In terms of assembly, interacts with CYCB2-1 and CYCB2-2. Binding to CYCB2-1 or CYCB2-2 activates CDK kinase. Expressed in the dividing region of the root apex and the intercalary meristem of internodes.

Its subcellular location is the nucleus. The protein resides in the cytoplasm. It is found in the cytoskeleton. It localises to the spindle. The protein localises to the phragmoplast. The catalysed reaction is L-seryl-[protein] + ATP = O-phospho-L-seryl-[protein] + ADP + H(+). The enzyme catalyses L-threonyl-[protein] + ATP = O-phospho-L-threonyl-[protein] + ADP + H(+). It carries out the reaction [DNA-directed RNA polymerase] + ATP = phospho-[DNA-directed RNA polymerase] + ADP + H(+). Forms a complex with CYCB2-1 or CYCB2-2 that activates CDK kinase in tobacco BY2 cells during G2/M (mitosis) phases. May be involved in the regulation of the cell cycle at the G2/M transition. The polypeptide is Cyclin-dependent kinase B2-1 (CDKB2-1) (Oryza sativa subsp. japonica (Rice)).